The following is a 61-amino-acid chain: Disintegrin atroxatin (61 aa).

Positions 1–61 (NPCCDAATCK…ADCPRKGIYG (61 aa)) constitute a Disintegrin domain. Cystine bridges form between C3/C26, C9/C23, C17/C23, C22/C47, and C35/C54. The Cell attachment site motif lies at 39–41 (RGD).

Belongs to the venom metalloproteinase (M12B) family. P-II subfamily. P-IIa sub-subfamily. Monomer (disintegrin). As to expression, expressed by the venom gland.

Its subcellular location is the secreted. Its function is as follows. Inhibits fibrinogen interaction with platelets. Acts by binding to alpha-IIb/beta-3 (ITGA2B/ITGB3) on the platelet surface and inhibits aggregation induced by ADP, thrombin, platelet-activating factor and collagen. The polypeptide is Disintegrin atroxatin (Crotalus atrox (Western diamondback rattlesnake)).